A 447-amino-acid chain; its full sequence is GA-binding protein subunit beta-2 (447 aa).

ANK repeat units follow at residues 5–34 (DLGK…PFTT), 37–66 (LGTS…SRDA), 70–99 (VDRT…DVNA), 103–132 (LKMT…DVHA), and 136–166 (FDKS…QVNA). Ser253 carries the phosphoserine modification. A coiled-coil region spans residues 345–395 (EESKEGTERELLQQRLQEANRRAQEYRHQLLKKEQEAEQYRLRLEAMARQQ). The tract at residues 418–447 (REMEERETEVTGAVGTAEPHTGVSMETVST) is disordered.

Heterotetramer of two alpha and two beta subunits. The C-terminal is necessary for the formation of a heterotetrameric GABP-alpha-2/beta-2 complex, and also facilitates homotypic dimerization. Interacts with ADGRB2.

It localises to the nucleus. Its function is as follows. May function as transcription factor capable of interacting with purine rich repeats (GA repeats). In Bos taurus (Bovine), this protein is GA-binding protein subunit beta-2 (GABPB2).